The following is a 674-amino-acid chain: L-type lectin-domain containing receptor kinase IV.3 (674 aa).

The signal sequence occupies residues 1-22; the sequence is MFFKLFTIFFFFIILLSKPLNS. N21, N28, N40, N81, N136, and N188 each carry an N-linked (GlcNAc...) asparagine glycan. Over 23 to 296 the chain is Extracellular; that stretch reads SSQSLNFTYN…TSLQRFYKNR (274 aa). A legume-lectin like region spans residues 26–263; the sequence is SLNFTYNSFH…SEHFVFGWSF (238 aa). The chain crosses the membrane as a helical span at residues 297–317; the sequence is MPLFSLLLIPVLFVVSLIFLV. Over 318–674 the chain is Cytoplasmic; that stretch reads RFIVRRRRKF…IAYSIVSGGR (357 aa). The Protein kinase domain maps to 355–632; that stretch reads FKDKDLLGSG…LQYLRGDATL (278 aa). Residues 361 to 369 and K384 each bind ATP; that span reads LGSGGFGRV. D480 serves as the catalytic Proton acceptor.

This sequence in the C-terminal section; belongs to the protein kinase superfamily. Ser/Thr protein kinase family. It in the N-terminal section; belongs to the leguminous lectin family.

It is found in the cell membrane. The catalysed reaction is L-seryl-[protein] + ATP = O-phospho-L-seryl-[protein] + ADP + H(+). It carries out the reaction L-threonyl-[protein] + ATP = O-phospho-L-threonyl-[protein] + ADP + H(+). This is L-type lectin-domain containing receptor kinase IV.3 (LECRK43) from Arabidopsis thaliana (Mouse-ear cress).